We begin with the raw amino-acid sequence, 312 residues long: Putative HTH-type transcriptional regulatory protein TV0294 (312 aa).

In terms of domain architecture, HTH cro/C1-type spans L133 to H186. Positions I144–N163 form a DNA-binding region, H-T-H motif.

This is Putative HTH-type transcriptional regulatory protein TV0294 from Thermoplasma volcanium (strain ATCC 51530 / DSM 4299 / JCM 9571 / NBRC 15438 / GSS1).